The chain runs to 211 residues: MKWGINMLNREIINALLDIKAVELRVDKENWFTWASGIKSPIYCDNRLTMSYPKIRKQIAEGFVKKINELYPNVDYIVGTATAGIPHAAWISDIMDLPMLYVRGSAKDHGKTNQIEGKFEKGKKVVVIEDLISTGKSSVLAAQALQEEGLEVLGVIAIFSYNLNKAKEKFDEAKIPFSTLTNYDVLLELAKETGLIGDKENQILIDWRNNL.

Residues Arg103, Lys107, His109, and Glu129 to Ser137 each bind 5-phospho-alpha-D-ribose 1-diphosphate. Position 133 (Ser133) interacts with orotate.

This sequence belongs to the purine/pyrimidine phosphoribosyltransferase family. PyrE subfamily. In terms of assembly, homodimer. It depends on Mg(2+) as a cofactor.

It catalyses the reaction orotidine 5'-phosphate + diphosphate = orotate + 5-phospho-alpha-D-ribose 1-diphosphate. It participates in pyrimidine metabolism; UMP biosynthesis via de novo pathway; UMP from orotate: step 1/2. Its function is as follows. Catalyzes the transfer of a ribosyl phosphate group from 5-phosphoribose 1-diphosphate to orotate, leading to the formation of orotidine monophosphate (OMP). The sequence is that of Orotate phosphoribosyltransferase from Fusobacterium nucleatum subsp. nucleatum (strain ATCC 25586 / DSM 15643 / BCRC 10681 / CIP 101130 / JCM 8532 / KCTC 2640 / LMG 13131 / VPI 4355).